The chain runs to 128 residues: Glycine cleavage system H protein (128 aa).

A Lipoyl-binding domain is found at 25-107 (TFKVGITDHA…YEAGWLFTVR (83 aa)). Position 66 is an N6-lipoyllysine (Lys66).

Belongs to the GcvH family. The glycine cleavage system is composed of four proteins: P, T, L and H. It depends on (R)-lipoate as a cofactor.

Its function is as follows. The glycine cleavage system catalyzes the degradation of glycine. The H protein shuttles the methylamine group of glycine from the P protein to the T protein. The sequence is that of Glycine cleavage system H protein from Kocuria rhizophila (strain ATCC 9341 / DSM 348 / NBRC 103217 / DC2201).